Here is a 58-residue protein sequence, read N- to C-terminus: Proteinase inhibitor PSKP-1 (58 aa).

Residues 1-58 (VIEPKCYKYEGKKCPPDINPVCGTDKRTYYNECALCVFIRQSTKKADKAIKIKKWGKC) form the Kazal-like domain. 3 disulfide bridges follow: Cys6–Cys36, Cys14–Cys33, and Cys22–Cys58.

As to quaternary structure, monomer. In terms of tissue distribution, skin.

Its subcellular location is the secreted. In terms of biological role, has antibacterial activity against Gram-negative bacterium E.coli ATCC 11229. Shows hemagglutinating activity. Inhibits prolyl endopeptidase, but not trypsin, chymotrypsin, V8 protease and proteinase K. May have a role in mucosal defense against microbes by interacting directly with their membranes. The sequence is that of Proteinase inhibitor PSKP-1 from Phyllomedusa sauvagei (Sauvage's leaf frog).